The chain runs to 487 residues: Betaine aldehyde dehydrogenase (487 aa).

Serine 26 and aspartate 93 together coordinate K(+). Position 150 to 152 (glycine 150 to tryptophan 152) interacts with NAD(+). The Charge relay system role is filled by lysine 162. NAD(+) is bound by residues lysine 176–glutamate 179 and serine 229–threonine 232. Position 244 (leucine 244) interacts with K(+). Glutamate 250 (proton acceptor) is an active-site residue. Residues glycine 252, cysteine 284, and glutamate 384 each contribute to the NAD(+) site. The Nucleophile role is filled by cysteine 284. Residue cysteine 284 is modified to Cysteine sulfenic acid (-SOH). K(+) is bound by residues lysine 454 and glycine 457. Glutamate 461 serves as the catalytic Charge relay system.

The protein belongs to the aldehyde dehydrogenase family. In terms of assembly, dimer of dimers. K(+) serves as cofactor.

It carries out the reaction betaine aldehyde + NAD(+) + H2O = glycine betaine + NADH + 2 H(+). Its pathway is amine and polyamine biosynthesis; betaine biosynthesis via choline pathway; betaine from betaine aldehyde: step 1/1. Involved in the biosynthesis of the osmoprotectant glycine betaine. Catalyzes the irreversible oxidation of betaine aldehyde to the corresponding acid. The sequence is that of Betaine aldehyde dehydrogenase from Rhizobium etli (strain ATCC 51251 / DSM 11541 / JCM 21823 / NBRC 15573 / CFN 42).